The chain runs to 374 residues: Small ribosomal subunit protein uS4m (374 aa).

Residues 259–323 enclose the S4 RNA-binding domain; sequence GRLENFLMRL…KKLYFFIKSK (65 aa).

Belongs to the universal ribosomal protein uS4 family.

It localises to the mitochondrion. This chain is Small ribosomal subunit protein uS4m (RPS4), found in Acanthamoeba castellanii (Amoeba).